A 102-amino-acid polypeptide reads, in one-letter code: uncharacterized protein (102 aa).

An HTH cro/C1-type domain is found at L48 to I102. The segment at residues L59–Q78 is a DNA-binding region (H-T-H motif).

This is an uncharacterized protein from Haemophilus influenzae (strain ATCC 51907 / DSM 11121 / KW20 / Rd).